We begin with the raw amino-acid sequence, 344 residues long: Putative glycosyltransferase EpsH (344 aa).

The protein belongs to the glycosyltransferase 2 family.

May be involved in the production of the exopolysaccharide (EPS) component of the extracellular matrix during biofilm formation. EPS is responsible for the adhesion of chains of cells into bundles. Required for biofilm maintenance. This chain is Putative glycosyltransferase EpsH (epsH), found in Bacillus subtilis (strain 168).